The primary structure comprises 1120 residues: Phosphatidylinositide phosphatase SAC2 (1120 aa).

The SAC domain occupies 167 to 518 (YKIFMDSDSF…GDTISRQYAG (352 aa)). Positions 593-760 (RGAQEQVSLL…RHSKPHEDIM (168 aa)) constitute a hSac2 domain. Disordered stretches follow at residues 837–881 (SSLE…SREN) and 979–1008 (PAPK…LPRP). Positions 851–860 (LKDHGPHSEE) are enriched in basic and acidic residues. 2 stretches are compositionally biased toward polar residues: residues 864–879 (DSDS…SGSR) and 998–1007 (SSHSQNQLPR).

The protein resides in the membrane. It localises to the clathrin-coated pit. It is found in the early endosome. The protein localises to the recycling endosome. It carries out the reaction a myo-inositol phosphate + H2O = myo-inositol + phosphate. In terms of biological role, inositol 4-phosphatase which mainly acts on phosphatidylinositol 4-phosphate. May be functionally linked to OCRL, which converts phosphatidylinositol 4,5-bisphosphate to phosphatidylinositol, for a sequential dephosphorylation of phosphatidylinositol 4,5-bisphosphate at the 5 and 4 position of inositol, thus playing an important role in the endocytic recycling. The chain is Phosphatidylinositide phosphatase SAC2 from Danio rerio (Zebrafish).